The primary structure comprises 339 residues: Protein RecA (339 aa).

Position 73-80 (73-80 (GPESSGKT)) interacts with ATP.

The protein belongs to the RecA family.

The protein resides in the cytoplasm. Its function is as follows. Can catalyze the hydrolysis of ATP in the presence of single-stranded DNA, the ATP-dependent uptake of single-stranded DNA by duplex DNA, and the ATP-dependent hybridization of homologous single-stranded DNAs. It interacts with LexA causing its activation and leading to its autocatalytic cleavage. This Mycoplasmopsis pulmonis (strain UAB CTIP) (Mycoplasma pulmonis) protein is Protein RecA.